A 272-amino-acid polypeptide reads, in one-letter code: Phosphonates import ATP-binding protein PhnC 1 (272 aa).

One can recognise an ABC transporter domain in the interval L2 to D246. G35 to S42 provides a ligand contact to ATP.

This sequence belongs to the ABC transporter superfamily. Phosphonates importer (TC 3.A.1.9.1) family. In terms of assembly, the complex is composed of two ATP-binding proteins (PhnC), two transmembrane proteins (PhnE) and a solute-binding protein (PhnD).

Its subcellular location is the cell inner membrane. The catalysed reaction is phosphonate(out) + ATP + H2O = phosphonate(in) + ADP + phosphate + H(+). Functionally, part of the ABC transporter complex PhnCDE involved in phosphonates import. Responsible for energy coupling to the transport system. The protein is Phosphonates import ATP-binding protein PhnC 1 of Rhodopseudomonas palustris (strain BisB18).